Here is a 177-residue protein sequence, read N- to C-terminus: NADH-quinone oxidoreductase subunit B (177 aa).

[4Fe-4S] cluster is bound by residues C56, C57, C121, and C151.

It belongs to the complex I 20 kDa subunit family. NDH-1 is composed of 14 different subunits. Subunits NuoB, C, D, E, F, and G constitute the peripheral sector of the complex. Requires [4Fe-4S] cluster as cofactor.

It localises to the cell inner membrane. The enzyme catalyses a quinone + NADH + 5 H(+)(in) = a quinol + NAD(+) + 4 H(+)(out). Functionally, NDH-1 shuttles electrons from NADH, via FMN and iron-sulfur (Fe-S) centers, to quinones in the respiratory chain. Couples the redox reaction to proton translocation (for every two electrons transferred, four hydrogen ions are translocated across the cytoplasmic membrane), and thus conserves the redox energy in a proton gradient. The sequence is that of NADH-quinone oxidoreductase subunit B from Jannaschia sp. (strain CCS1).